The chain runs to 96 residues: Co-chaperonin GroES (96 aa).

This sequence belongs to the GroES chaperonin family. As to quaternary structure, heptamer of 7 subunits arranged in a ring. Interacts with the chaperonin GroEL.

Its subcellular location is the cytoplasm. Together with the chaperonin GroEL, plays an essential role in assisting protein folding. The GroEL-GroES system forms a nano-cage that allows encapsulation of the non-native substrate proteins and provides a physical environment optimized to promote and accelerate protein folding. GroES binds to the apical surface of the GroEL ring, thereby capping the opening of the GroEL channel. This is Co-chaperonin GroES from Leptothrix cholodnii (strain ATCC 51168 / LMG 8142 / SP-6) (Leptothrix discophora (strain SP-6)).